We begin with the raw amino-acid sequence, 197 residues long: Proteinase inhibitor type-2 (197 aa).

The first 24 residues, 1–24 (MAVHKVSFVAHLLVLGMFLLLVDA), serve as a signal peptide directing secretion. Tandem repeats lie at residues 24 to 80 (AKAC…DPKN), 81 to 140 (PNVC…DEPK), and 141 to 196 (SCTT…PQSA). Intrachain disulfides connect Cys27–Cys115, Cys31–Cys111, Cys39–Cys121, Cys51–Cys88, Cys54–Cys72, Cys55–Cys84, Cys61–Cys97, and Cys114–Cys132.

It belongs to the protease inhibitor I20 (potato type II proteinase inhibitor) family.

This chain is Proteinase inhibitor type-2, found in Nicotiana tabacum (Common tobacco).